Reading from the N-terminus, the 328-residue chain is GTP 3',8-cyclase (328 aa).

Residues 1–229 form the Radical SAM core domain; the sequence is MNQVDYLRIS…DAQVRGAGPA (229 aa). Arg8 provides a ligand contact to GTP. [4Fe-4S] cluster-binding residues include Cys15 and Cys19. Tyr21 contributes to the S-adenosyl-L-methionine binding site. Position 22 (Cys22) interacts with [4Fe-4S] cluster. Position 60 (Arg60) interacts with GTP. Gly64 serves as a coordination point for S-adenosyl-L-methionine. Thr91 contributes to the GTP binding site. Ser115 serves as a coordination point for S-adenosyl-L-methionine. A GTP-binding site is contributed by Lys155. Met189 contributes to the S-adenosyl-L-methionine binding site. Residues Cys252 and Cys255 each contribute to the [4Fe-4S] cluster site. A GTP-binding site is contributed by 257–259; that stretch reads RMR. Cys269 contributes to the [4Fe-4S] cluster binding site.

Belongs to the radical SAM superfamily. MoaA family. Monomer and homodimer. Requires [4Fe-4S] cluster as cofactor.

The catalysed reaction is GTP + AH2 + S-adenosyl-L-methionine = (8S)-3',8-cyclo-7,8-dihydroguanosine 5'-triphosphate + 5'-deoxyadenosine + L-methionine + A + H(+). It functions in the pathway cofactor biosynthesis; molybdopterin biosynthesis. Functionally, catalyzes the cyclization of GTP to (8S)-3',8-cyclo-7,8-dihydroguanosine 5'-triphosphate. The sequence is that of GTP 3',8-cyclase from Nostoc sp. (strain PCC 7120 / SAG 25.82 / UTEX 2576).